The chain runs to 710 residues: DNA-directed RNA polymerase III subunit RPC5 (710 aa).

Positions 146–155 (DAKHREREAA) are enriched in basic and acidic residues. A disordered region spans residues 146-169 (DAKHREREAANEAGDSSQDEAEED). 2 positions are modified to phosphoserine: serine 161 and serine 162. A Glycyl lysine isopeptide (Lys-Gly) (interchain with G-Cter in SUMO2) cross-link involves residue lysine 171. A Phosphoserine modification is found at serine 192. Position 224 is a phosphotyrosine (tyrosine 224). Lysine 432 participates in a covalent cross-link: Glycyl lysine isopeptide (Lys-Gly) (interchain with G-Cter in SUMO2). Residue lysine 498 forms a Glycyl lysine isopeptide (Lys-Gly) (interchain with G-Cter in SUMO1); alternate linkage. Lysine 498 is covalently cross-linked (Glycyl lysine isopeptide (Lys-Gly) (interchain with G-Cter in SUMO2); alternate). Residues 498–526 (KEEPLSEEEADGAELEAEEEEPMDTAPST) are disordered. Acidic residues predominate over residues 502–520 (LSEEEADGAELEAEEEEPM). Phosphoserine is present on serine 503. A required for Pol III complex stability region spans residues 558 to 710 (NPVACELKAF…MWYLKGTVQS (153 aa)). Residue lysine 661 forms a Glycyl lysine isopeptide (Lys-Gly) (interchain with G-Cter in SUMO2) linkage.

As to quaternary structure, component of the RNA polymerase III complex consisting of at least 17 subunits: a ten-subunit horseshoe-shaped catalytic core composed of POLR3A/RPC1, POLR3B/RPC2, POLR1C/RPAC1, POLR1D/RPAC2, POLR3K/RPC10, POLR2E/RPABC1, POLR2F/RPABC2, POLR2H/RPABC3, POLR2K/RPABC4 and POLR2L/RPABC5; the stalk composed of two subunits POLR3H/RPC8 and CRCP/RPC9, forming a structural mobile part that protrudes out of the core and functions primarily in transcription initiation; and additional subunits homologous to general transcription factors of the RNA polymerase II machinery, POLR3D/RPC4-POLR3E/RPC5 heterodimer and POLR3/CRPC3-POLR3F/RPC6-POLR3G/RPC7 heterotrimer.

The protein resides in the nucleus. DNA-dependent RNA polymerase catalyzes the transcription of DNA into RNA using the four ribonucleoside triphosphates as substrates. Specific peripheric component of RNA polymerase III (Pol III) which synthesizes small non-coding RNAs including 5S rRNA, snRNAs, tRNAs and miRNAs from at least 500 distinct genomic loci. Assembles with POLR3D/RPC4 forming a subcomplex that binds the Pol III core. Enables recruitment of Pol III at transcription initiation site and drives transcription initiation from both type 2 and type 3 DNA promoters. Required for efficient transcription termination and reinitiation. Plays a key role in sensing and limiting infection by intracellular bacteria and DNA viruses. Acts as a nuclear and cytosolic DNA sensor involved in innate immune response. Can sense non-self dsDNA that serves as template for transcription into dsRNA. The non-self RNA polymerase III transcripts, such as Epstein-Barr virus-encoded RNAs (EBERs) induce type I interferon and NF-kappa-B through the RIG-I pathway. In Mus musculus (Mouse), this protein is DNA-directed RNA polymerase III subunit RPC5.